The sequence spans 191 residues: Ribosome maturation factor RimM (191 aa).

Residues 102 to 185 enclose the PRC barrel domain; it reads EEEYHVSQLI…RIEINPPKGL (84 aa).

This sequence belongs to the RimM family. Binds ribosomal protein uS19.

It localises to the cytoplasm. In terms of biological role, an accessory protein needed during the final step in the assembly of 30S ribosomal subunit, possibly for assembly of the head region. Essential for efficient processing of 16S rRNA. May be needed both before and after RbfA during the maturation of 16S rRNA. It has affinity for free ribosomal 30S subunits but not for 70S ribosomes. This is Ribosome maturation factor RimM from Crocosphaera subtropica (strain ATCC 51142 / BH68) (Cyanothece sp. (strain ATCC 51142)).